The primary structure comprises 69 residues: Ubiquitin-ribosomal protein eL40 fusion protein (69 aa).

The Ubiquitin-like domain occupies 1–17 (NIQKESTLHLVLRLRGG). Lys-4 is covalently cross-linked (Glycyl lysine isopeptide (Lys-Gly) (interchain with G-Cter in ubiquitin)). A Glycyl lysine isopeptide (Gly-Lys) (interchain with K-? in acceptor proteins) cross-link involves residue Gly-17. Lys-39 is subject to N6,N6,N6-trimethyllysine.

It in the N-terminal section; belongs to the ubiquitin family. This sequence in the C-terminal section; belongs to the eukaryotic ribosomal protein eL40 family. As to quaternary structure, part of the 60S ribosomal subunit. In terms of processing, trimethylation of Lys-39 ('Lys-22' of the mature chain) by SMYD5 promotes translation elongation and protein synthesis.

Its subcellular location is the cytoplasm. It is found in the nucleus. Its function is as follows. Exists either covalently attached to another protein, or free (unanchored). When covalently bound, it is conjugated to target proteins via an isopeptide bond either as a monomer (monoubiquitin), a polymer linked via different Lys residues of the ubiquitin (polyubiquitin chains) or a linear polymer linked via the initiator Met of the ubiquitin (linear polyubiquitin chains). Polyubiquitin chains, when attached to a target protein, have different functions depending on the Lys residue of the ubiquitin that is linked: Lys-6-linked may be involved in DNA repair; Lys-11-linked is involved in ERAD (endoplasmic reticulum-associated degradation) and in cell-cycle regulation; Lys-29-linked is involved in proteotoxic stress response and cell cycle; Lys-33-linked is involved in kinase modification; Lys-48-linked is involved in protein degradation via the proteasome; Lys-63-linked is involved in endocytosis, DNA-damage responses as well as in signaling processes leading to activation of the transcription factor NF-kappa-B. Linear polymer chains formed via attachment by the initiator Met lead to cell signaling. Ubiquitin is usually conjugated to Lys residues of target proteins, however, in rare cases, conjugation to Cys or Ser residues has been observed. When polyubiquitin is free (unanchored-polyubiquitin), it also has distinct roles, such as in activation of protein kinases, and in signaling. In terms of biological role, component of the 60S subunit of the ribosome. This chain is Ubiquitin-ribosomal protein eL40 fusion protein (UBA52), found in Gallus gallus (Chicken).